The sequence spans 198 residues: Nucleoplasmin (198 aa).

Positions 35 to 38 are acidic tract A1; sequence SDED. The span at 125-145 shows a compositional bias: acidic residues; it reads SWAEEEGEEEVEEEEEEEDPE. The tract at residues 125–198 is disordered; the sequence is SWAEEEGEEE…GRGRKPAAKK (74 aa). An acidic tract A2 region spans residues 128–145; it reads EEEGEEEVEEEEEEEDPE. Basic residues predominate over residues 150–167; that stretch reads AVKRPAASKKGSQAKKKK. The Bipartite nuclear localization signal motif lies at 152–167; the sequence is KRPAASKKGSQAKKKK. The segment at 172 to 174 is acidic tract A3; that stretch reads EEE. The segment covering 183–198 has biased composition (basic residues); sequence KKGKGAGRGRKPAAKK.

It belongs to the nucleoplasmin family. Homopentamer. As to expression, expressed in oocytes.

It is found in the nucleus. Functionally, acts as a chaperone for histones, such as histone H2A-H2B, and thus regulates the assembly of nucleosome cores. Involved in chromatin remodeling, especially during fertilization and early embryonic development. May be involved in sperm chromatin decondensation during fertilization. This Rhinella marina (Cane toad) protein is Nucleoplasmin.